Reading from the N-terminus, the 200-residue chain is Protein GrpE (200 aa).

Residues 1-25 (MMSKQNKKDWKKFKDEHKEEHKVEN) show a composition bias toward basic and acidic residues. The tract at residues 1–52 (MMSKQNKKDWKKFKDEHKEEHKVENEILEEETDEESQHQEPALGHPSYTALE) is disordered.

It belongs to the GrpE family. Homodimer.

The protein localises to the cytoplasm. Its function is as follows. Participates actively in the response to hyperosmotic and heat shock by preventing the aggregation of stress-denatured proteins, in association with DnaK and GrpE. It is the nucleotide exchange factor for DnaK and may function as a thermosensor. Unfolded proteins bind initially to DnaJ; upon interaction with the DnaJ-bound protein, DnaK hydrolyzes its bound ATP, resulting in the formation of a stable complex. GrpE releases ADP from DnaK; ATP binding to DnaK triggers the release of the substrate protein, thus completing the reaction cycle. Several rounds of ATP-dependent interactions between DnaJ, DnaK and GrpE are required for fully efficient folding. The polypeptide is Protein GrpE (Legionella pneumophila subsp. pneumophila (strain Philadelphia 1 / ATCC 33152 / DSM 7513)).